We begin with the raw amino-acid sequence, 214 residues long: Adenylate kinase (214 aa).

ATP is bound at residue 10–15 (GAGKGT). Residues 30–59 (STGDMFRDHKARGTELGKTVQAIMDAGGLV) are NMP. AMP is bound by residues threonine 31, arginine 36, 57 to 59 (GLV), 85 to 88 (GYPR), and glutamine 92. An LID region spans residues 126–163 (GRRSCPKCGAVYHVSANPPRRMGYCDRDDAGLVQRDDD). ATP is bound at residue arginine 127. 2 residues coordinate Zn(2+): cysteine 130 and cysteine 133. 136-137 (VY) provides a ligand contact to ATP. Residues cysteine 150 and aspartate 153 each coordinate Zn(2+). Arginine 160 and arginine 171 together coordinate AMP. ATP is bound at residue glycine 199.

This sequence belongs to the adenylate kinase family. As to quaternary structure, monomer.

Its subcellular location is the cytoplasm. The catalysed reaction is AMP + ATP = 2 ADP. Its pathway is purine metabolism; AMP biosynthesis via salvage pathway; AMP from ADP: step 1/1. Catalyzes the reversible transfer of the terminal phosphate group between ATP and AMP. Plays an important role in cellular energy homeostasis and in adenine nucleotide metabolism. The protein is Adenylate kinase of Anaeromyxobacter sp. (strain Fw109-5).